Reading from the N-terminus, the 498-residue chain is ATP synthase subunit beta, chloroplastic (498 aa).

An ATP-binding site is contributed by 172-179; that stretch reads GGAGVGKT.

This sequence belongs to the ATPase alpha/beta chains family. In terms of assembly, F-type ATPases have 2 components, CF(1) - the catalytic core - and CF(0) - the membrane proton channel. CF(1) has five subunits: alpha(3), beta(3), gamma(1), delta(1), epsilon(1). CF(0) has four main subunits: a(1), b(1), b'(1) and c(9-12).

It localises to the plastid. Its subcellular location is the chloroplast thylakoid membrane. The catalysed reaction is ATP + H2O + 4 H(+)(in) = ADP + phosphate + 5 H(+)(out). Its function is as follows. Produces ATP from ADP in the presence of a proton gradient across the membrane. The catalytic sites are hosted primarily by the beta subunits. The chain is ATP synthase subunit beta, chloroplastic from Agrostis stolonifera (Creeping bentgrass).